We begin with the raw amino-acid sequence, 186 residues long: Probable chorismate pyruvate-lyase (186 aa).

3 residues coordinate substrate: R77, L115, and E174.

The protein belongs to the UbiC family.

It localises to the cytoplasm. The enzyme catalyses chorismate = 4-hydroxybenzoate + pyruvate. The protein operates within cofactor biosynthesis; ubiquinone biosynthesis. Functionally, removes the pyruvyl group from chorismate, with concomitant aromatization of the ring, to provide 4-hydroxybenzoate (4HB) for the ubiquinone pathway. The sequence is that of Probable chorismate pyruvate-lyase from Shewanella sp. (strain W3-18-1).